Reading from the N-terminus, the 1021-residue chain is Disease resistance protein Pikm2-TS (1021 aa).

Positions 1–182 (MELVVGASEA…PQIIGIKEPV (182 aa)) are structured coiled coil (CC) domain. Residues 186–519 (TVMEELEVWL…WIAEGFANEK (334 aa)) form the NB-ARC domain. Positions 297–317 (PENDGNPDNTPIRLQETTDDD) are disordered. LRR repeat units follow at residues 612–634 (LAQVRSLTVFGNLNHVPFHSFNY), 659–682 (MLLLKYLSIRRTEISKIPSKIQKL), and 683–705 (EYLETLDIRETYVRDLPKSIVQL). The interval 719 to 751 (RKGLRLPQEKSKKPIKNPSPQGKTKEPAKKGFL) is disordered. LRR repeat units lie at residues 785–807 (LTGLRKLAIYKLNITKGGDTFKQ), 817–841 (SCGLQTLAINDENSEFINSLGDMPA), 843–865 (PRYLVALELSGKLEKLPKWITSI), 866–888 (TTLNKLTISVTVLRTETLEILHI), 912–935 (KDILENNKLDSDGEIVIPAEGFKS), and 957–981 (MPALEIIEMRFKDFEGLFGIEILEN).

Belongs to the disease resistance NB-LRR family. In terms of tissue distribution, constitutively expressed.

Functionally, disease resistance (R) protein. Resistance proteins guard the plant against pathogens that contain an appropriate avirulence protein via an indirect interaction with this avirulence protein. That triggers a defense system including the hypersensitive response, which restricts the pathogen growth. Contribution of Pikm-1 is required to recognize the effector avirulence protein AVR-Pik. This is Disease resistance protein Pikm2-TS from Oryza sativa subsp. japonica (Rice).